Here is a 333-residue protein sequence, read N- to C-terminus: Extracellular globin (333 aa).

An N-terminal signal peptide occupies residues 1 to 18 (MHSSIVLAIVLFVAIASA). Globin domains are found at residues 25-167 (CMKS…HHGR) and 174-318 (CMNS…KHAK). 2 residues coordinate heme b: Gln-82 and His-114. N-linked (GlcNAc...) asparagine glycosylation occurs at Asn-216. Heme b is bound by residues Gln-231 and His-263. A disordered region spans residues 314-333 (DKHAKAEKDHHEGEHKEEHH).

Belongs to the globin family. In terms of assembly, homooctamer.

It is found in the secreted. The protein localises to the extracellular space. The sequence is that of Extracellular globin from Pseudoterranova decipiens (Sealworm).